We begin with the raw amino-acid sequence, 256 residues long: Glutamate racemase (256 aa).

Substrate is bound by residues 11–12 (DS) and 43–44 (YG). The active-site Proton donor/acceptor is Cys74. A substrate-binding site is contributed by 75–76 (NT). Cys182 (proton donor/acceptor) is an active-site residue. 183–184 (TH) serves as a coordination point for substrate.

It belongs to the aspartate/glutamate racemases family.

The enzyme catalyses L-glutamate = D-glutamate. The protein operates within cell wall biogenesis; peptidoglycan biosynthesis. Functionally, provides the (R)-glutamate required for cell wall biosynthesis. The protein is Glutamate racemase of Leptospira interrogans serogroup Icterohaemorrhagiae serovar Lai (strain 56601).